A 1291-amino-acid polypeptide reads, in one-letter code: Histone-lysine N-methyltransferase SETDB1 (1291 aa).

Residues 18–64 adopt a coiled-coil conformation; that stretch reads ESEEIAELQQAVVEELGISMEELRHFIDEELEKMDCVQQRKKQLAEL. The disordered stretch occupies residues 108-147; sequence RDSSSEDESSRPTEIIEIPDEDDDVLSIDSGDAGSRTPKD. Phosphoserine occurs at positions 112 and 117. Thr120 bears the Phosphothreonine mark. Residues 124–133 show a composition bias toward acidic residues; it reads EIPDEDDDVL. Lys182 participates in a covalent cross-link: Glycyl lysine isopeptide (Lys-Gly) (interchain with G-Cter in SUMO2); alternate. Residue Lys182 forms a Glycyl lysine isopeptide (Lys-Gly) (interchain with G-Cter in ubiquitin); alternate linkage. 2 Tudor domains span residues 257–320 and 347–403; these read KLYV…LKKT and LLKS…SMKT. The interval 404–545 is disordered; the sequence is SSASALEKKQ…APAPSALPAP (142 aa). Positions 433-444 are enriched in polar residues; sequence QYTQDLTGTGTQ. A compositionally biased stretch (pro residues) spans 448 to 468; that stretch reads VEPPQPTAPPAPPFPPAPPLS. Positions 477 to 515 are enriched in polar residues; it reads ESQLAQSRKQVAKKSTSFRPGSVGSGHSSPTSPALSENV. A compositionally biased stretch (low complexity) spans 528–539; it reads SPLGSTASAPAP. In terms of domain architecture, MBD spans 594–665; sequence YRGKNPLLVP…EMFCLDPYVL (72 aa). In terms of domain architecture, Pre-SET spans 727–800; that stretch reads VGCDCKDGCR…MCTNRLVQHG (74 aa). Residues Cys729, Cys731, Cys735, Cys741, Cys743, Cys781, Cys785, Cys787, and Cys792 each coordinate Zn(2+). Positions 803 to 1266 constitute an SET domain; it reads VRLQLFKTQN…AGTELTWDYN (464 aa). S-adenosyl-L-methionine contacts are provided by residues 813-815, Asp851, and Tyr853; that span reads KGW. Residue Lys867 forms a Glycyl lysine isopeptide (Lys-Gly) (interchain with G-Cter in ubiquitin) linkage. The segment at 868–1160 is disordered; sequence EGYESDAPCS…MTGPMKRQVA (293 aa). Residues 896-907 are compositionally biased toward acidic residues; sequence EDPEESNDDSSD. A compositionally biased stretch (pro residues) spans 951–963; the sequence is DLGPPHIPVPPSI. A Phosphoserine modification is found at Ser1025. The span at 1031–1050 shows a compositional bias: basic and acidic residues; it reads IKDEGDIKQAKKEDTDDRNK. A Glycyl lysine isopeptide (Lys-Gly) (interchain with G-Cter in SUMO2); alternate cross-link involves residue Lys1032. Lys1032 participates in a covalent cross-link: Glycyl lysine isopeptide (Lys-Gly) (interchain with G-Cter in SUMO1); alternate. Lys1038 participates in a covalent cross-link: Glycyl lysine isopeptide (Lys-Gly) (interchain with G-Cter in SUMO2). Residues 1052–1063 show a composition bias toward polar residues; the sequence is SVVTESSRNYGY. Phosphoserine is present on Ser1066. Lys1069 participates in a covalent cross-link: Glycyl lysine isopeptide (Lys-Gly) (interchain with G-Cter in SUMO2). Residues 1100-1115 show a composition bias toward low complexity; sequence LTLSSSTESEGESGTS. Residues 1116 to 1140 are compositionally biased toward polar residues; that stretch reads RKPTAGQTSATAVDSDDIQTISSGS. A Glycyl lysine isopeptide (Lys-Gly) (interchain with G-Cter in SUMO2) cross-link involves residue Lys1149. N6,N6,N6-trimethyllysine; alternate is present on residues Lys1170 and Lys1178. N6,N6-dimethyllysine; alternate is present on residues Lys1170 and Lys1178. S-adenosyl-L-methionine-binding positions include Arg1220 and 1223 to 1224; that span reads NH. Residues Cys1226, Cys1279, Cys1281, and Cys1286 each coordinate Zn(2+). The 17-residue stretch at 1275 to 1291 folds into the Post-SET domain; sequence KELLCCCGAIECRGRLL.

It belongs to the class V-like SAM-binding methyltransferase superfamily. Histone-lysine methyltransferase family. Suvar3-9 subfamily. As to quaternary structure, part of a complex containing at least CDYL, REST, WIZ, SETDB1, EHMT1 and EHMT2. Forms a complex with ATRX, TRIM28 and ZNF274. Probably part of a corepressor complex containing ZNF304, TRIM28, SETDB1 and DNMT1. Interacts with TRIM28/TIF1B. Interacts with ATF7IP and ATF7IP2; the interaction with ATF7IP protects SETDB1 from proteasomal degradation and is required to stimulate histone methyltransferase activity and facilitate the conversion of dimethylated to trimethylated H3 'Lys-9'. Interacts with CBX1 and CBX5. Interacts with DNMT3A and DNMT3B. Interacts with SUMO2. Interacts with MPHOSPH8. Interacts with ERG. Interacts with HDAC1, HDAC2, SIN3A and SIN3B. Interacts with ATRX. Interacts with RESF1. Interacts with ZNF638. Interacts with TASOR. Interacts with ZNF263; recruited to the SIX3 promoter along with other proteins involved in chromatin modification and transcriptional corepression where it contributes to transcriptional repression. Interacts with PHF13; the interaction probably enhances SETDB1 chromatin-associated levels and activity. Interacts with VRK1. In terms of processing, degraded by the proteasome, shielded by interaction with ATF7IP. Monoubiquitinated at Lys-867 by E2 enzymes of the UBE2E family. The conjugated-Ub is protected from deubiquitination by the SET domain. Monoubiquitination at Lys-867 is required for catalytic activity, H3K9 methylation and endogenous retrovirus silencing. In terms of tissue distribution, widely expressed. High expression in testis.

Its subcellular location is the nucleus. It is found in the cytoplasm. The protein resides in the chromosome. It carries out the reaction N(6),N(6)-dimethyl-L-lysyl(9)-[histone H3] + S-adenosyl-L-methionine = N(6),N(6),N(6)-trimethyl-L-lysyl(9)-[histone H3] + S-adenosyl-L-homocysteine + H(+). Functionally, histone methyltransferase that specifically trimethylates 'Lys-9' of histone H3. H3 'Lys-9' trimethylation represents a specific tag for epigenetic transcriptional repression by recruiting HP1 (CBX1, CBX3 and/or CBX5) proteins to methylated histones. Mainly functions in euchromatin regions, thereby playing a central role in the silencing of euchromatic genes. H3 'Lys-9' trimethylation is coordinated with DNA methylation. Required for HUSH-mediated heterochromatin formation and gene silencing. Forms a complex with MBD1 and ATF7IP that represses transcription and couples DNA methylation and histone 'Lys-9' trimethylation. Its activity is dependent on MBD1 and is heritably maintained through DNA replication by being recruited by CAF-1. SETDB1 is targeted to histone H3 by TRIM28/TIF1B, a factor recruited by KRAB zinc-finger proteins. Probably forms a corepressor complex required for activated KRAS-mediated promoter hypermethylation and transcriptional silencing of tumor suppressor genes (TSGs) or other tumor-related genes in colorectal cancer (CRC) cells. Required to maintain a transcriptionally repressive state of genes in undifferentiated embryonic stem cells (ESCs). In ESCs, in collaboration with TRIM28, is also required for H3K9me3 and silencing of endogenous and introduced retroviruses in a DNA-methylation independent-pathway. Associates at promoter regions of tumor suppressor genes (TSGs) leading to their gene silencing. The SETDB1-TRIM28-ZNF274 complex may play a role in recruiting ATRX to the 3'-exons of zinc-finger coding genes with atypical chromatin signatures to establish or maintain/protect H3K9me3 at these transcriptionally active regions. The protein is Histone-lysine N-methyltransferase SETDB1 of Homo sapiens (Human).